A 124-amino-acid chain; its full sequence is S-adenosylmethionine decarboxylase proenzyme (124 aa).

Serine 63 (schiff-base intermediate with substrate; via pyruvic acid) is an active-site residue. A Pyruvic acid (Ser); by autocatalysis modification is found at serine 63. The active-site Proton acceptor; for processing activity is the histidine 68. Catalysis depends on cysteine 83, which acts as the Proton donor; for catalytic activity.

Belongs to the prokaryotic AdoMetDC family. Type 1 subfamily. As to quaternary structure, heterotetramer of two alpha and two beta chains arranged as a dimer of alpha/beta heterodimers. Pyruvate is required as a cofactor. In terms of processing, is synthesized initially as an inactive proenzyme. Formation of the active enzyme involves a self-maturation process in which the active site pyruvoyl group is generated from an internal serine residue via an autocatalytic post-translational modification. Two non-identical subunits are generated from the proenzyme in this reaction, and the pyruvate is formed at the N-terminus of the alpha chain, which is derived from the carboxyl end of the proenzyme. The post-translation cleavage follows an unusual pathway, termed non-hydrolytic serinolysis, in which the side chain hydroxyl group of the serine supplies its oxygen atom to form the C-terminus of the beta chain, while the remainder of the serine residue undergoes an oxidative deamination to produce ammonia and the pyruvoyl group blocking the N-terminus of the alpha chain.

The enzyme catalyses S-adenosyl-L-methionine + H(+) = S-adenosyl 3-(methylsulfanyl)propylamine + CO2. The protein operates within amine and polyamine biosynthesis; S-adenosylmethioninamine biosynthesis; S-adenosylmethioninamine from S-adenosyl-L-methionine: step 1/1. Catalyzes the decarboxylation of S-adenosylmethionine to S-adenosylmethioninamine (dcAdoMet), the propylamine donor required for the synthesis of the polyamines spermine and spermidine from the diamine putrescine. The polypeptide is S-adenosylmethionine decarboxylase proenzyme (Caldicellulosiruptor bescii (strain ATCC BAA-1888 / DSM 6725 / KCTC 15123 / Z-1320) (Anaerocellum thermophilum)).